Reading from the N-terminus, the 258-residue chain is Phosphate import ATP-binding protein PstB (258 aa).

The region spanning 5 to 253 is the ABC transporter domain; the sequence is LDLNDVNIYY…PTKKETEDYI (249 aa). An ATP-binding site is contributed by 37-44; sequence GPSGCGKS.

It belongs to the ABC transporter superfamily. Phosphate importer (TC 3.A.1.7) family. As to quaternary structure, the complex is composed of two ATP-binding proteins (PstB), two transmembrane proteins (PstC and PstA) and a solute-binding protein (PstS).

It localises to the cell membrane. It carries out the reaction phosphate(out) + ATP + H2O = ADP + 2 phosphate(in) + H(+). Functionally, part of the ABC transporter complex PstSACB involved in phosphate import. Responsible for energy coupling to the transport system. This chain is Phosphate import ATP-binding protein PstB, found in Corynebacterium jeikeium (strain K411).